The sequence spans 156 residues: Small ribosomal subunit protein uS7 (156 aa).

It belongs to the universal ribosomal protein uS7 family. As to quaternary structure, part of the 30S ribosomal subunit. Contacts proteins S9 and S11.

One of the primary rRNA binding proteins, it binds directly to 16S rRNA where it nucleates assembly of the head domain of the 30S subunit. Is located at the subunit interface close to the decoding center, probably blocks exit of the E-site tRNA. This chain is Small ribosomal subunit protein uS7, found in Bifidobacterium longum (strain NCC 2705).